A 492-amino-acid chain; its full sequence is FAD-linked oxidoreductase pgmH (492 aa).

The FAD-binding PCMH-type domain occupies 54-224; it reads SIRLATLVVY…TEFKYRVHKQ (171 aa).

This sequence belongs to the oxygen-dependent FAD-linked oxidoreductase family. FAD serves as cofactor.

It functions in the pathway pigment biosynthesis. Its pathway is secondary metabolite biosynthesis. Its function is as follows. FAD-linked oxidoreductase; part of the gene cluster that mediates the biosynthesis of pleosporalin A, ascomycone A, as well as a third cryptic naphthoquinone derived pigment, all responsible for the coloration of conidia. Essential for the production of pleosporalin A, but not the 2 other final products. The pathway begins with the biosynthesis of the cyclized heptaketide 3-acetonyl-1,6,8-trihydroxy-2-naphthaldehyde by the NR-PKS pgmA. The C-6 hydroxyl group is further methylated by the O-methyltransferase pgmB to yield fusarubinaldehyde which is in turn oxidized by the cytochrome P450 monooxygenase pgmC at C-9. The C-1 hydroxyl group is then methylated spontaneously. Although pgmE, pgmD and pgmH are essential for the production of pleosporalin A, it is not the case for the 2 other final products and it remains difficult to assign a specific function to each enzyme. PgmF and pgmG seem not to be involved in pigment biosynthesis although they were regulated by the cluster-specific transcription factor pgmR. The protein is FAD-linked oxidoreductase pgmH of Aspergillus terreus.